The sequence spans 94 residues: Ribonuclease P protein component 1 (94 aa).

Belongs to the eukaryotic/archaeal RNase P protein component 1 family. As to quaternary structure, consists of a catalytic RNA component and at least 4-5 protein subunits.

Its subcellular location is the cytoplasm. The catalysed reaction is Endonucleolytic cleavage of RNA, removing 5'-extranucleotides from tRNA precursor.. Part of ribonuclease P, a protein complex that generates mature tRNA molecules by cleaving their 5'-ends. This chain is Ribonuclease P protein component 1, found in Thermofilum pendens (strain DSM 2475 / Hrk 5).